The sequence spans 236 residues: Uridylate kinase (236 aa).

Position 10–13 (10–13 (KLSG)) interacts with ATP. G52 provides a ligand contact to UMP. ATP-binding residues include G53 and R57. Residues D72 and 133-140 (TGNPFFTT) each bind UMP. 3 residues coordinate ATP: T160, Y166, and D169.

Belongs to the UMP kinase family. Homohexamer.

Its subcellular location is the cytoplasm. It catalyses the reaction UMP + ATP = UDP + ADP. The protein operates within pyrimidine metabolism; CTP biosynthesis via de novo pathway; UDP from UMP (UMPK route): step 1/1. With respect to regulation, inhibited by UTP. Catalyzes the reversible phosphorylation of UMP to UDP. This chain is Uridylate kinase, found in Bacteroides fragilis (strain ATCC 25285 / DSM 2151 / CCUG 4856 / JCM 11019 / LMG 10263 / NCTC 9343 / Onslow / VPI 2553 / EN-2).